A 343-amino-acid polypeptide reads, in one-letter code: Protease inhibitor Egf1.5a (343 aa).

Positions 1–28 (MYIDTGIMSNNIFLFAFFALVGLTRIEA) are cleaved as a signal peptide. The TIL domain maps to 52-104 (CRENEHYNSTRIECEDECNDRNNKLCYRFQQFCWCNEGYIRNSSHICVKLEDC).

The protein belongs to the polydnaviridae EGF-like motif protein family. Interacts with host PAP1, PAP3 and SPH2.

In terms of biological role, counteracts the host humoral immune response by inhibiting the processing and the amidolytic activity of host PAP1 and PAP3. Thereby, melanization of host hemolymph, normally producing several reactive intermediates toxic for viruses, is deregulated and proper immune response cannot occur. This Microplitis demolitor bracovirus (isolate Webb) (MdBV) protein is Protease inhibitor Egf1.5a (O1).